Consider the following 297-residue polypeptide: Probable tyrosine phosphatase protein J2 (297 aa).

The Tyrosine-protein phosphatase domain occupies 21-286 (DSLSCIIQEY…VFCYHLIHAY (266 aa)). The active-site Phosphocysteine intermediate is the Cys227.

It belongs to the protein-tyrosine phosphatase family.

The catalysed reaction is O-phospho-L-tyrosyl-[protein] + H2O = L-tyrosyl-[protein] + phosphate. The sequence is that of Probable tyrosine phosphatase protein J2 (J3) from Microplitis demolitor (Parasitoid wasp).